A 51-amino-acid chain; its full sequence is Large ribosomal subunit protein bL33 (51 aa).

This sequence belongs to the bacterial ribosomal protein bL33 family.

The sequence is that of Large ribosomal subunit protein bL33 from Colwellia psychrerythraea (strain 34H / ATCC BAA-681) (Vibrio psychroerythus).